Reading from the N-terminus, the 141-residue chain is 4-hydroxybenzoyl-CoA thioesterase (141 aa).

Residue aspartate 17 is part of the active site. Residues tryptophan 47, 59–61 (TPI), and lysine 90 contribute to the substrate site.

This sequence belongs to the 4-hydroxybenzoyl-CoA thioesterase family. In terms of assembly, homotetramer.

The catalysed reaction is 4-hydroxybenzoyl-CoA + H2O = 4-hydroxybenzoate + CoA + H(+). It participates in xenobiotic degradation; 4-chlorobenzoate degradation; 4-hydroxybenzoate from 4-chlorobenzoate: step 3/3. Unaffected by EDTA, Mg(2+), Mn(2+), Fe(2+), Ca(2+), Co(2+) and Zn(2+). Its function is as follows. Hydrolyzes 4-hydroxybenzoate-CoA, and to a lesser extent benzoyl-CoA and 4-chlorobenzoate-CoA. Not active against aliphatic acyl-CoA thioesters, including palmitoyl-CoA, hexanoyl-CoA and acetyl-CoA. This chain is 4-hydroxybenzoyl-CoA thioesterase, found in Pseudomonas sp. (strain CBS-3).